The primary structure comprises 122 residues: uncharacterized protein (122 aa).

3 helical membrane-spanning segments follow: residues 33-53 (ALGL…LTIP), 58-78 (VLGV…LLRW), and 97-117 (PGYL…LVVA).

It to E.coli YidH.

Its subcellular location is the cell membrane. This is an uncharacterized protein from Mycobacterium tuberculosis (strain CDC 1551 / Oshkosh).